A 543-amino-acid polypeptide reads, in one-letter code: CTP synthase (543 aa).

Residues 1–265 (MTKFIFVTGG…DRLVTDRFRI (265 aa)) form an amidoligase domain region. S13 provides a ligand contact to CTP. Position 13 (S13) interacts with UTP. Residues 14-19 (SLGKGI) and D71 contribute to the ATP site. The Mg(2+) site is built by D71 and E139. CTP-binding positions include 146 to 148 (DIE), 186 to 191 (KTKPTQ), and K222. Residues 186–191 (KTKPTQ) and K222 contribute to the UTP site. The Glutamine amidotransferase type-1 domain maps to 290–541 (EIAMVGKYVD…VEAASQHKQT (252 aa)). G351 lines the L-glutamine pocket. The active-site Nucleophile; for glutamine hydrolysis is C378. L-glutamine is bound by residues 379-382 (LGMQ), E402, and R469. Catalysis depends on residues H514 and E516.

This sequence belongs to the CTP synthase family. As to quaternary structure, homotetramer.

The catalysed reaction is UTP + L-glutamine + ATP + H2O = CTP + L-glutamate + ADP + phosphate + 2 H(+). It carries out the reaction L-glutamine + H2O = L-glutamate + NH4(+). It catalyses the reaction UTP + NH4(+) + ATP = CTP + ADP + phosphate + 2 H(+). The protein operates within pyrimidine metabolism; CTP biosynthesis via de novo pathway; CTP from UDP: step 2/2. With respect to regulation, allosterically activated by GTP, when glutamine is the substrate; GTP has no effect on the reaction when ammonia is the substrate. The allosteric effector GTP functions by stabilizing the protein conformation that binds the tetrahedral intermediate(s) formed during glutamine hydrolysis. Inhibited by the product CTP, via allosteric rather than competitive inhibition. Functionally, catalyzes the ATP-dependent amination of UTP to CTP with either L-glutamine or ammonia as the source of nitrogen. Regulates intracellular CTP levels through interactions with the four ribonucleotide triphosphates. This Hydrogenovibrio crunogenus (strain DSM 25203 / XCL-2) (Thiomicrospira crunogena) protein is CTP synthase.